The chain runs to 363 residues: 2,5-diketocamphane 1,2-monooxygenase 2 (363 aa).

FMN contacts are provided by residues methionine 74 and 186-194; that span reads TGLTKNSSS.

The protein belongs to the bacterial luciferase oxidoreductase family. In terms of assembly, homodimer. Likely forms a loose transient complex with a P.putida flavin reductase that provides the required FMNH(2) to the enzyme.

It catalyses the reaction (1R,4R)-bornane-2,5-dione + FMNH2 + O2 = (1R,4R)-5-oxo-1,2-campholide + FMN + H2O + H(+). It participates in terpene metabolism; (R)-camphor degradation. Functionally, involved in the degradation and assimilation of (+)-camphor, which allows P.putida strain NCIMB 10007 to grow on this enantiomer of camphor as the sole carbon source. Catalyzes the FMNH(2)-dependent lactonization of 2,5-diketocamphane via a Baeyer-Villiger oxidation to produce the unstable lactone 5-oxo-1,2-campholide with (R,R) configuration, that presumably undergoes spontaneous hydrolysis to form 2-oxo-Delta(3)-4,5,5-trimethylcyclopentenylacetate. Is also able to convert (+)-camphor and norcamphor to the corresponding lactone in vitro. Shows no conversion of (-)-camphor, (+)-fenchone, (-)-fenchone, and (+)-nopinone. Acts on other bicyclic ketones and, to a lesser extent, on some 2- and 4-substituted monocyclic ketones. This chain is 2,5-diketocamphane 1,2-monooxygenase 2, found in Pseudomonas putida (Arthrobacter siderocapsulatus).